The sequence spans 325 residues: 4-hydroxy-3-methylbut-2-enyl diphosphate reductase (325 aa).

Residue Cys21 participates in [4Fe-4S] cluster binding. Residues His50 and His83 each coordinate (2E)-4-hydroxy-3-methylbut-2-enyl diphosphate. 2 residues coordinate dimethylallyl diphosphate: His50 and His83. 2 residues coordinate isopentenyl diphosphate: His50 and His83. Cys105 contributes to the [4Fe-4S] cluster binding site. His133 is a (2E)-4-hydroxy-3-methylbut-2-enyl diphosphate binding site. His133 lines the dimethylallyl diphosphate pocket. Residue His133 coordinates isopentenyl diphosphate. Residue Glu135 is the Proton donor of the active site. Thr173 contacts (2E)-4-hydroxy-3-methylbut-2-enyl diphosphate. Residue Cys203 coordinates [4Fe-4S] cluster. The (2E)-4-hydroxy-3-methylbut-2-enyl diphosphate site is built by Ser231, Ser232, Asn233, and Ser275. Residues Ser231, Ser232, Asn233, and Ser275 each contribute to the dimethylallyl diphosphate site. Residues Ser231, Ser232, Asn233, and Ser275 each coordinate isopentenyl diphosphate.

The protein belongs to the IspH family. The cofactor is [4Fe-4S] cluster.

The catalysed reaction is isopentenyl diphosphate + 2 oxidized [2Fe-2S]-[ferredoxin] + H2O = (2E)-4-hydroxy-3-methylbut-2-enyl diphosphate + 2 reduced [2Fe-2S]-[ferredoxin] + 2 H(+). The enzyme catalyses dimethylallyl diphosphate + 2 oxidized [2Fe-2S]-[ferredoxin] + H2O = (2E)-4-hydroxy-3-methylbut-2-enyl diphosphate + 2 reduced [2Fe-2S]-[ferredoxin] + 2 H(+). The protein operates within isoprenoid biosynthesis; dimethylallyl diphosphate biosynthesis; dimethylallyl diphosphate from (2E)-4-hydroxy-3-methylbutenyl diphosphate: step 1/1. It participates in isoprenoid biosynthesis; isopentenyl diphosphate biosynthesis via DXP pathway; isopentenyl diphosphate from 1-deoxy-D-xylulose 5-phosphate: step 6/6. In terms of biological role, catalyzes the conversion of 1-hydroxy-2-methyl-2-(E)-butenyl 4-diphosphate (HMBPP) into a mixture of isopentenyl diphosphate (IPP) and dimethylallyl diphosphate (DMAPP). Acts in the terminal step of the DOXP/MEP pathway for isoprenoid precursor biosynthesis. This is 4-hydroxy-3-methylbut-2-enyl diphosphate reductase from Bordetella pertussis (strain Tohama I / ATCC BAA-589 / NCTC 13251).